The sequence spans 321 residues: MDSDFVPPSVSFQLPVIDFSDQNLKPGSSKWDEVKADVLKALEDYGCFEAFFDKLSVELNRSVFEAMEDLFELPIPTKQRNVSSKPFHGYLCHNLYESLGIDDANVLEKVNDFTQQLWPDHGNKSISETIHLFSEQLVELDLMVRRMIMESFGIENYIDEHLNSTYYLTRLMKYTSPPDDDDDDEETKLGLRSHTDKNIITILHQYQVDGLEVKTKDDKWIKVKPSQDSVLVMVGDSLCALLNGRLHSPYHRVIMTGKKTRYSTGLFSIPKTGVIIDSPEELVDKEHPRIFKPFEYTDFLHFFQTEAGRIAQSALHAFAAF.

The 106-residue stretch at 165-270 (TYYLTRLMKY…RYSTGLFSIP (106 aa)) folds into the Fe2OG dioxygenase domain. Positions 194, 196, and 251 each coordinate Fe cation. Position 261 (arginine 261) interacts with 2-oxoglutarate.

The protein belongs to the iron/ascorbate-dependent oxidoreductase family. The cofactor is Fe(2+).

In terms of biological role, probable 2-oxoglutarate-dependent dioxygenase that may be involved in glucosinolates biosynthesis. May play a role in the production of aliphatic glucosinolates. The chain is Probable 2-oxoglutarate-dependent dioxygenase AOP1.2 (AOP1.2) from Arabidopsis thaliana (Mouse-ear cress).